The primary structure comprises 194 residues: Fe/S biogenesis protein NfuA (194 aa).

The [4Fe-4S] cluster site is built by cysteine 152 and cysteine 155.

This sequence belongs to the NfuA family. In terms of assembly, homodimer. [4Fe-4S] cluster is required as a cofactor.

In terms of biological role, involved in iron-sulfur cluster biogenesis. Binds a 4Fe-4S cluster, can transfer this cluster to apoproteins, and thereby intervenes in the maturation of Fe/S proteins. Could also act as a scaffold/chaperone for damaged Fe/S proteins. The protein is Fe/S biogenesis protein NfuA of Pseudomonas putida (strain GB-1).